Reading from the N-terminus, the 245-residue chain is 8-amino-3,8-dideoxy-manno-octulosonate cytidylyltransferase (245 aa).

It belongs to the KdsB family.

The protein resides in the cytoplasm. The catalysed reaction is 8-amino-3,8-dideoxy-alpha-D-manno-octulosonate + CTP = CMP-8-amino-3,8-dideoxy-alpha-D-manno-oct-2-ulosonate + diphosphate. It functions in the pathway bacterial outer membrane biogenesis; lipopolysaccharide biosynthesis. Its function is as follows. Activates KDO8N (a required 8-carbon sugar) for incorporation into bacterial lipopolysaccharide in the Shewanella genus. In Shewanella frigidimarina (strain NCIMB 400), this protein is 8-amino-3,8-dideoxy-manno-octulosonate cytidylyltransferase.